The sequence spans 510 residues: Replication factor C large subunit (510 aa).

An ATP-binding site is contributed by 48-55 (GPPGTGKT). The segment at 459–510 (MESMLERKREESEVEEEAKEIEEAVEKAEEEEEREEKKKEGGGEQRTLDAFF) is disordered. A compositionally biased stretch (basic and acidic residues) spans 493-510 (EEKKKEGGGEQRTLDAFF).

This sequence belongs to the activator 1 small subunits family. RfcL subfamily. As to quaternary structure, heteromultimer composed of small subunits (RfcS) and large subunits (RfcL).

Part of the RFC clamp loader complex which loads the PCNA sliding clamp onto DNA. In Methanopyrus kandleri (strain AV19 / DSM 6324 / JCM 9639 / NBRC 100938), this protein is Replication factor C large subunit.